The chain runs to 174 residues: Crossover junction endodeoxyribonuclease RuvC (174 aa).

Residues D8, E67, and D139 contribute to the active site. Mg(2+)-binding residues include D8, E67, and D139.

Belongs to the RuvC family. As to quaternary structure, homodimer which binds Holliday junction (HJ) DNA. The HJ becomes 2-fold symmetrical on binding to RuvC with unstacked arms; it has a different conformation from HJ DNA in complex with RuvA. In the full resolvosome a probable DNA-RuvA(4)-RuvB(12)-RuvC(2) complex forms which resolves the HJ. Mg(2+) serves as cofactor.

Its subcellular location is the cytoplasm. The enzyme catalyses Endonucleolytic cleavage at a junction such as a reciprocal single-stranded crossover between two homologous DNA duplexes (Holliday junction).. In terms of biological role, the RuvA-RuvB-RuvC complex processes Holliday junction (HJ) DNA during genetic recombination and DNA repair. Endonuclease that resolves HJ intermediates. Cleaves cruciform DNA by making single-stranded nicks across the HJ at symmetrical positions within the homologous arms, yielding a 5'-phosphate and a 3'-hydroxyl group; requires a central core of homology in the junction. The consensus cleavage sequence is 5'-(A/T)TT(C/G)-3'. Cleavage occurs on the 3'-side of the TT dinucleotide at the point of strand exchange. HJ branch migration catalyzed by RuvA-RuvB allows RuvC to scan DNA until it finds its consensus sequence, where it cleaves and resolves the cruciform DNA. The sequence is that of Crossover junction endodeoxyribonuclease RuvC from Pseudomonas entomophila (strain L48).